Here is a 197-residue protein sequence, read N- to C-terminus: Protein GrpE (197 aa).

Positions 1-40 (MSSKEQKTPEGQAPEEIIMDRHEEIEAVEPEASAEQVDPR) are disordered.

It belongs to the GrpE family. As to quaternary structure, homodimer.

It is found in the cytoplasm. Functionally, participates actively in the response to hyperosmotic and heat shock by preventing the aggregation of stress-denatured proteins, in association with DnaK and GrpE. It is the nucleotide exchange factor for DnaK and may function as a thermosensor. Unfolded proteins bind initially to DnaJ; upon interaction with the DnaJ-bound protein, DnaK hydrolyzes its bound ATP, resulting in the formation of a stable complex. GrpE releases ADP from DnaK; ATP binding to DnaK triggers the release of the substrate protein, thus completing the reaction cycle. Several rounds of ATP-dependent interactions between DnaJ, DnaK and GrpE are required for fully efficient folding. This is Protein GrpE from Shigella flexneri serotype 5b (strain 8401).